A 1507-amino-acid chain; its full sequence is DNA-directed RNA polymerase subunit beta' (1507 aa).

Zn(2+)-binding residues include Cys71, Cys73, Cys86, and Cys89. Mg(2+)-binding residues include Asp470, Asp472, and Asp474. Zn(2+) contacts are provided by Cys800, Cys874, Cys881, and Cys884.

The protein belongs to the RNA polymerase beta' chain family. As to quaternary structure, the RNAP catalytic core consists of 2 alpha, 1 beta, 1 beta' and 1 omega subunit. When a sigma factor is associated with the core the holoenzyme is formed, which can initiate transcription. It depends on Mg(2+) as a cofactor. Zn(2+) serves as cofactor.

It carries out the reaction RNA(n) + a ribonucleoside 5'-triphosphate = RNA(n+1) + diphosphate. In terms of biological role, DNA-dependent RNA polymerase catalyzes the transcription of DNA into RNA using the four ribonucleoside triphosphates as substrates. In Nitratiruptor sp. (strain SB155-2), this protein is DNA-directed RNA polymerase subunit beta'.